The primary structure comprises 301 residues: UDP-N-acetylenolpyruvoylglucosamine reductase (301 aa).

Residues 30 to 194 (VGGEPDYLVF…LSAKFALAPG (165 aa)) enclose the FAD-binding PCMH-type domain. Residue Arg173 is part of the active site. Ser223 acts as the Proton donor in catalysis. The active site involves Glu293.

This sequence belongs to the MurB family. The cofactor is FAD.

Its subcellular location is the cytoplasm. The catalysed reaction is UDP-N-acetyl-alpha-D-muramate + NADP(+) = UDP-N-acetyl-3-O-(1-carboxyvinyl)-alpha-D-glucosamine + NADPH + H(+). It functions in the pathway cell wall biogenesis; peptidoglycan biosynthesis. Its function is as follows. Cell wall formation. The chain is UDP-N-acetylenolpyruvoylglucosamine reductase from Streptococcus pneumoniae (strain CGSP14).